A 135-amino-acid chain; its full sequence is MAQAFQFELVSPERLLLSAQVTEVVIPGSEGYLTALAGHSPLMTTIMPGVVSVKLADGKSDSYVVFGGFADITPQGCTVLAESATHVDDIDPADIQRRIEHARKALDDASSNEHRTKAEIFLHQLMTLQGTIMPA.

This sequence belongs to the ATPase epsilon chain family. In terms of assembly, F-type ATPases have 2 components, CF(1) - the catalytic core - and CF(0) - the membrane proton channel. CF(1) has five subunits: alpha(3), beta(3), gamma(1), delta(1), epsilon(1). CF(0) has three main subunits: a, b and c.

The protein localises to the cell inner membrane. In terms of biological role, produces ATP from ADP in the presence of a proton gradient across the membrane. The chain is ATP synthase epsilon chain from Brucella anthropi (strain ATCC 49188 / DSM 6882 / CCUG 24695 / JCM 21032 / LMG 3331 / NBRC 15819 / NCTC 12168 / Alc 37) (Ochrobactrum anthropi).